Here is a 397-residue protein sequence, read N- to C-terminus: 1-deoxy-D-xylulose 5-phosphate reductoisomerase (397 aa).

8 residues coordinate NADPH: Thr12, Gly13, Ser14, Ile15, Gly38, Lys39, Asn40, and Asn126. Position 127 (Lys127) interacts with 1-deoxy-D-xylulose 5-phosphate. Glu128 is an NADPH binding site. Asp152 provides a ligand contact to Mn(2+). 4 residues coordinate 1-deoxy-D-xylulose 5-phosphate: Ser153, Glu154, Ser188, and His211. Glu154 contacts Mn(2+). Gly217 serves as a coordination point for NADPH. Ser224, Asn229, Lys230, and Glu233 together coordinate 1-deoxy-D-xylulose 5-phosphate. A Mn(2+)-binding site is contributed by Glu233.

This sequence belongs to the DXR family. It depends on Mg(2+) as a cofactor. Mn(2+) serves as cofactor.

It carries out the reaction 2-C-methyl-D-erythritol 4-phosphate + NADP(+) = 1-deoxy-D-xylulose 5-phosphate + NADPH + H(+). The protein operates within isoprenoid biosynthesis; isopentenyl diphosphate biosynthesis via DXP pathway; isopentenyl diphosphate from 1-deoxy-D-xylulose 5-phosphate: step 1/6. Catalyzes the NADPH-dependent rearrangement and reduction of 1-deoxy-D-xylulose-5-phosphate (DXP) to 2-C-methyl-D-erythritol 4-phosphate (MEP). This chain is 1-deoxy-D-xylulose 5-phosphate reductoisomerase, found in Haemophilus influenzae (strain ATCC 51907 / DSM 11121 / KW20 / Rd).